The following is a 671-amino-acid chain: MASGGSGGVSVPALWSEVNRYGQNGDFTRALKTVNKILQINKDDVTALHCKVVCLIQNGSFKEALNVINTHTKVLANNSLSFEKAYCEYRLNRIENALKTIESANQQTDKLKELYGQVLYRLERYDECLAVYRDLVRNSQDDYDEERKTNLSAVVAAQSNWEKVVPENLGLQEGTHELCYNTACALIGQGQLNQAMKILQKAEDLCRRSLSEDTDGTEEDPQAELAIIHGQMAYILQLQGRTEEALQLYNQIIKLKPTDVGLLAVIANNIITINKDQNVFDSKKKVKLTNAEGVEFKLSKKQLQAIEFNKALLAMYTNQAEQCRKISASLQSQSPEHLLPVLIQAAQLCREKQHTKAIELLQEFSDQHPENAAEIKLTMAQLKISQGNISKACLILRSIEELKHKPGMVSALVTMYSHEEDIDSAIEVFTQAIQWYQNHQPKSPAHLSLIREAANFKLKYGRKKEAISDLQQLWKQNPKDIHTLAQLISAYSLVDPEKAKALSKHLPSSDSMSLKVDVEALENSAGATYIRKKGGKVTGDSQPKEQGQGDLKKKKKKKKGKLPKNYDPKVTPDPERWLPMRERSYYRGRKKGKKKDQIGKGTQGATAGASSELDASKTVSSPPTSPRPGSAATVSASTSNIIPPRHQKPAGAPATKKKQQQKKKKGGKGGW.

Alanine 2 is subject to N-acetylalanine. The interval 9–163 (VSVPALWSEV…VVAAQSNWEK (155 aa)) is required for interaction with SRP68. TPR repeat units follow at residues 11 to 44 (VPALWSEVNRYGQNGDFTRALKTVNKILQINKDD), 109 to 142 (DKLKELYGQVLYRLERYDECLAVYRDLVRNSQDD), and 226 to 259 (AIIHGQMAYILQLQGRTEEALQLYNQIIKLKPTD). Positions 379 to 509 (MAQLKISQGN…KALSKHLPSS (131 aa)) are required for the interaction with the SRP68/7SL RNA complex. Lysine 391 is covalently cross-linked (Glycyl lysine isopeptide (Lys-Gly) (interchain with G-Cter in SUMO1); alternate). A Glycyl lysine isopeptide (Lys-Gly) (interchain with G-Cter in SUMO2); alternate cross-link involves residue lysine 391. TPR repeat units follow at residues 406–439 (PGMVSALVTMYSHEEDIDSAIEVFTQAIQWYQNH) and 447–480 (LSLIREAANFKLKYGRKKEAISDLQQLWKQNPKD). Positions 532–671 (KKGGKVTGDS…KKKKGGKGGW (140 aa)) are disordered. The interval 545 to 617 (EQGQGDLKKK…GASSELDASK (73 aa)) is RNA-binding. Over residues 552 to 562 (KKKKKKKKGKL) the composition is skewed to basic residues. Over residues 564–585 (KNYDPKVTPDPERWLPMRERSY) the composition is skewed to basic and acidic residues. Phosphothreonine is present on residues threonine 571 and threonine 618. A phosphoserine mark is found at serine 630 and serine 635. Residues 632–641 (ATVSASTSNI) are compositionally biased toward polar residues. A compositionally biased stretch (basic residues) spans 655–671 (TKKKQQQKKKKGGKGGW).

It belongs to the SRP72 family. Heterodimer with SRP68. SRP68-SRP72 heterodimer formation is stabilized by the presence of 7SL RNA. Component of a signal recognition particle (SRP) complex that consists of a 7SL RNA molecule of 300 nucleotides and six protein subunits: SRP72, SRP68, SRP54, SRP19, SRP14 and SRP9. Within the SRP complex, interacts (via N-terminus) with SRP68 (via C-terminus).

It localises to the cytoplasm. The protein localises to the endoplasmic reticulum. Functionally, component of the signal recognition particle (SRP) complex, a ribonucleoprotein complex that mediates the cotranslational targeting of secretory and membrane proteins to the endoplasmic reticulum (ER). The SRP complex interacts with the signal sequence in nascent secretory and membrane proteins and directs them to the membrane of the ER. The SRP complex targets the ribosome-nascent chain complex to the SRP receptor (SR), which is anchored in the ER, where SR compaction and GTPase rearrangement drive cotranslational protein translocation into the ER. Binds the signal recognition particle RNA (7SL RNA) in presence of SRP68. Can bind 7SL RNA with low affinity. The SRP complex possibly participates in the elongation arrest function. The chain is Signal recognition particle subunit SRP72 (SRP72) from Homo sapiens (Human).